The chain runs to 666 residues: Fructose-1,6-bisphosphatase class 3 (666 aa).

Belongs to the FBPase class 3 family. Mn(2+) serves as cofactor.

It carries out the reaction beta-D-fructose 1,6-bisphosphate + H2O = beta-D-fructose 6-phosphate + phosphate. The protein operates within carbohydrate biosynthesis; gluconeogenesis. In Parabacteroides distasonis (strain ATCC 8503 / DSM 20701 / CIP 104284 / JCM 5825 / NCTC 11152), this protein is Fructose-1,6-bisphosphatase class 3.